Reading from the N-terminus, the 121-residue chain is Large ribosomal subunit protein eL31 (121 aa).

The protein belongs to the eukaryotic ribosomal protein eL31 family.

The chain is Large ribosomal subunit protein eL31 (RPL31) from Perilla frutescens (Beefsteak mint).